A 232-amino-acid polypeptide reads, in one-letter code: Large ribosomal subunit protein uL1 (232 aa).

It belongs to the universal ribosomal protein uL1 family. Part of the 50S ribosomal subunit.

Functionally, binds directly to 23S rRNA. The L1 stalk is quite mobile in the ribosome, and is involved in E site tRNA release. Protein L1 is also a translational repressor protein, it controls the translation of the L11 operon by binding to its mRNA. This is Large ribosomal subunit protein uL1 from Rhizobium rhizogenes (strain K84 / ATCC BAA-868) (Agrobacterium radiobacter).